Consider the following 277-residue polypeptide: Thymidylate synthase (277 aa).

Arg27 is a dUMP binding site. A (6R)-5,10-methylene-5,6,7,8-tetrahydrofolate-binding site is contributed by His57. 132–133 (RR) is a binding site for dUMP. The Nucleophile role is filled by Cys152. DUMP-binding positions include 179 to 182 (RSAD), Asn190, and 220 to 222 (HIY). Asp182 serves as a coordination point for (6R)-5,10-methylene-5,6,7,8-tetrahydrofolate. Residue Ala276 participates in (6R)-5,10-methylene-5,6,7,8-tetrahydrofolate binding.

It belongs to the thymidylate synthase family. Bacterial-type ThyA subfamily. As to quaternary structure, homodimer.

The protein localises to the cytoplasm. It carries out the reaction dUMP + (6R)-5,10-methylene-5,6,7,8-tetrahydrofolate = 7,8-dihydrofolate + dTMP. Its pathway is pyrimidine metabolism; dTTP biosynthesis. Functionally, catalyzes the reductive methylation of 2'-deoxyuridine-5'-monophosphate (dUMP) to 2'-deoxythymidine-5'-monophosphate (dTMP) while utilizing 5,10-methylenetetrahydrofolate (mTHF) as the methyl donor and reductant in the reaction, yielding dihydrofolate (DHF) as a by-product. This enzymatic reaction provides an intracellular de novo source of dTMP, an essential precursor for DNA biosynthesis. The sequence is that of Thymidylate synthase from Acidovorax sp. (strain JS42).